The chain runs to 1846 residues: Insulin-like receptor (1846 aa).

3 N-linked (GlcNAc...) asparagine glycosylation sites follow: N113, N180, and N364. 5 disulfide bridges follow: C371–C386, C393–C401, C397–C410, C413–C422, and C426–C438. An N-linked (GlcNAc...) asparagine glycan is attached at N453. Intrachain disulfides connect C469–C483 and C486–C490. N518 is a glycosylation site (N-linked (GlcNAc...) asparagine). C615 and C646 are oxidised to a cystine. N652, N671, and N696 each carry an N-linked (GlcNAc...) asparagine glycan. 3 consecutive Fibronectin type-III domains span residues 775-869 (TPDP…TMMG), 969-1067 (KPSS…LKRT), and 1077-1179 (LNET…TPGF). Positions 944–980 (EKAENLGKAPKTLGGKKPLIHISKKKPSSSSTTSTPA) are disordered. A compositionally biased stretch (basic residues) spans 961–970 (PLIHISKKKP). Residues 970–1183 (PSSSSTTSTP…VMTPGFFTVE (214 aa)) lie on the Extracellular side of the membrane. Positions 971-980 (SSSSTTSTPA) are enriched in low complexity. N-linked (GlcNAc...) asparagine glycosylation is found at N1017, N1047, N1078, N1087, and N1093. The helical transmembrane segment at 1184-1204 (IILGMLLVFLILMSIAGCIIY) threads the bilayer. Residues 1205–1846 (YYIQVRYGKK…IEDNEHHPLV (642 aa)) are Cytoplasmic-facing. The Protein kinase domain maps to 1246–1528 (VVLGQQCGEG…LLAAEASPEF (283 aa)). ATP is bound by residues 1252 to 1260 (CGEGSFGKV) and K1282. The active-site Proton acceptor is the D1388. Disordered regions lie at residues 1718-1742 (ISSM…TNWS) and 1769-1826 (QQQQ…IFNG). The span at 1726-1742 (STGASSSSYGVPQTNWS) shows a compositional bias: polar residues. Residues 1808-1821 (YRNNGSPSRNGNSR) are compositionally biased toward low complexity.

This sequence belongs to the protein kinase superfamily. Tyr protein kinase family. Insulin receptor subfamily. As to quaternary structure, tetramer of 2 alpha and 2 beta chains linked by disulfide bonds. The alpha chains contribute to the formation of the ligand-binding domain, while the beta chains carry the kinase domain. Interacts (via cytoplasmic domain) with shc-1 (PID domain). Interacts (via kinase domain) with daf-18 (via C-terminus). Interacts with casy-1; promoting axonal localization. The cofactor is Mg(2+).

It localises to the membrane. Its subcellular location is the cell projection. The protein resides in the axon. The enzyme catalyses L-tyrosyl-[protein] + ATP = O-phospho-L-tyrosyl-[protein] + ADP + H(+). Its activity is regulated as follows. Autophosphorylation activates the kinase activity. Interaction with shc-1 may inhibit its activity. Insulin receptor-like tyrosine kinase which regulates metabolism, controls longevity and prevents developmental arrest at the dauer stage. Binding of INS family members may either stimulate, or antagonize, association of the receptor with downstream mediators such as pdk-1 and age-1. Required for germline progenitor proliferation during larval development. Plays a role in maintaining gonad integrity in a daf-16/FOXO-dependent manner. Required for the response to environmental stimuli such as light, food, pheromone, and temperature. Negatively regulates resistance to UV and oxidative stress. In a daf-16/FOXO-dependent manner, plays a role in regulating the response to white light. Role in immune function and pathogen resistance. Negatively regulates autophagy. Regulates daf-18/PTEN protein levels. Plays a role in controlling seam cell development during the larval stages. Functionally, required for taste avoidance learning in the cell body of ASER gustatory neurons. In terms of biological role, required for taste avoidance learning in axons of ASER gustatory neurons. This Caenorhabditis elegans protein is Insulin-like receptor.